The sequence spans 154 residues: 6,7-dimethyl-8-ribityllumazine synthase (154 aa).

5-amino-6-(D-ribitylamino)uracil contacts are provided by residues F22, 56-58, and 80-82; these read AFE and AVI. 85–86 provides a ligand contact to (2S)-2-hydroxy-3-oxobutyl phosphate; the sequence is AT. H88 (proton donor) is an active-site residue. F113 is a binding site for 5-amino-6-(D-ribitylamino)uracil. R127 contacts (2S)-2-hydroxy-3-oxobutyl phosphate.

Belongs to the DMRL synthase family.

It carries out the reaction (2S)-2-hydroxy-3-oxobutyl phosphate + 5-amino-6-(D-ribitylamino)uracil = 6,7-dimethyl-8-(1-D-ribityl)lumazine + phosphate + 2 H2O + H(+). It functions in the pathway cofactor biosynthesis; riboflavin biosynthesis; riboflavin from 2-hydroxy-3-oxobutyl phosphate and 5-amino-6-(D-ribitylamino)uracil: step 1/2. Catalyzes the formation of 6,7-dimethyl-8-ribityllumazine by condensation of 5-amino-6-(D-ribitylamino)uracil with 3,4-dihydroxy-2-butanone 4-phosphate. This is the penultimate step in the biosynthesis of riboflavin. The protein is 6,7-dimethyl-8-ribityllumazine synthase of Agathobacter rectalis (strain ATCC 33656 / DSM 3377 / JCM 17463 / KCTC 5835 / VPI 0990) (Eubacterium rectale).